We begin with the raw amino-acid sequence, 37 residues long: Large ribosomal subunit protein bL36 (37 aa).

It belongs to the bacterial ribosomal protein bL36 family.

The sequence is that of Large ribosomal subunit protein bL36 from Ureaplasma parvum serovar 3 (strain ATCC 27815 / 27 / NCTC 11736).